Reading from the N-terminus, the 276-residue chain is Undecaprenyl-diphosphatase 2 (276 aa).

Helical transmembrane passes span M1–V21, Q44–F64, G87–L107, V114–L134, M150–F170, A190–L210, D222–M242, and L251–L271.

It belongs to the UppP family.

The protein resides in the cell inner membrane. It carries out the reaction di-trans,octa-cis-undecaprenyl diphosphate + H2O = di-trans,octa-cis-undecaprenyl phosphate + phosphate + H(+). Its function is as follows. Catalyzes the dephosphorylation of undecaprenyl diphosphate (UPP). Confers resistance to bacitracin. This is Undecaprenyl-diphosphatase 2 from Burkholderia lata (strain ATCC 17760 / DSM 23089 / LMG 22485 / NCIMB 9086 / R18194 / 383).